Here is a 414-residue protein sequence, read N- to C-terminus: Tryptophan-specific transport protein (414 aa).

Over 1–15 (MATLTTTQTSPSLLG) the chain is Cytoplasmic. The helical transmembrane segment at 16–36 (GVVIIGGTIIGAGMFSLPVVM) threads the bilayer. Residues 37-41 (SGAWF) are Periplasmic-facing. A helical membrane pass occupies residues 42–62 (FWSMAALIFTWFCMLHSGLMI). Residues 63–88 (LEANLNYRIGSSFDTITKDLLGKGWN) lie on the Cytoplasmic side of the membrane. The chain crosses the membrane as a helical span at residues 89–109 (VVNGISIAFVLYILTYAYISA). Residues 110-128 (SGSILHHTFAEMSLNVPAR) lie on the Periplasmic side of the membrane. A helical transmembrane segment spans residues 129–149 (AAGFGFALLVAFVVWLSTKAV). The Cytoplasmic segment spans residues 150–151 (SR). Residues 152–172 (MTAIVLGAKVITFFLTFGSLL) traverse the membrane as a helical segment. Residues 173-193 (GHVQPATLFNVAESNASYAPY) lie on the Periplasmic side of the membrane. A helical transmembrane segment spans residues 194–214 (LLMTLPFCLASFGYHGNVPSL). Residues 215-228 (MKYYGKDPKTIVKC) are Cytoplasmic-facing. Residues 229 to 249 (LVYGTLMALALYTIWLLATMG) traverse the membrane as a helical segment. Over 250–285 (NIPRPEFIGIAEKGGNIDVLVQALSGVLNSRSLDLL) the chain is Periplasmic. Residues 286–306 (LVVFSNFAVASSFLGVTLGLF) form a helical membrane-spanning segment. The Cytoplasmic portion of the chain corresponds to 307-325 (DYLADLFGFDDSAVGRLKT). A run of 2 helical transmembrane segments spans residues 326 to 346 (ALLTFAPPVVGGLLFPNGFLY) and 347 to 367 (AIGYAGLAATIWAAIVPALLA). Residues 368–386 (RASRKRFGSPKFRVWGGKP) lie on the Cytoplasmic side of the membrane. The helical transmembrane segment at 387 to 407 (MIALILVFGVGNALVHILSSF) threads the bilayer. Residues 408–414 (NLLPVYQ) lie on the Periplasmic side of the membrane.

Belongs to the amino acid/polyamine transporter 2 family. Mtr/TnaB/TyrP permease subfamily.

The protein localises to the cell inner membrane. The catalysed reaction is L-tryptophan(in) + H(+)(in) = L-tryptophan(out) + H(+)(out). Functionally, involved in the transport of tryptophan into the cell. This is Tryptophan-specific transport protein (mtr) from Shigella flexneri.